The sequence spans 548 residues: Putative ATP-dependent RNA helicase R290 (548 aa).

Positions 38–206 (INKVINGEDV…CKVLQLKTNE (169 aa)) constitute a Helicase ATP-binding domain. An ATP-binding site is contributed by 51 to 58 (LMTSAGKS). A DEAH box motif is present at residues 150–153 (DEAH). Residues 231–376 (DIVPIINKYP…KTQLALLEQM (146 aa)) enclose the Helicase C-terminal domain.

The protein belongs to the DEAD box helicase family. DEAH subfamily.

It carries out the reaction ATP + H2O = ADP + phosphate + H(+). The polypeptide is Putative ATP-dependent RNA helicase R290 (Acanthamoeba polyphaga mimivirus (APMV)).